An 856-amino-acid chain; its full sequence is Leucine--tRNA ligase (856 aa).

The 'HIGH' region signature appears at 42-52; the sequence is PYPSGKLHMGH. The 'KMSKS' region signature appears at 615 to 619; it reads KMSKS. K618 contributes to the ATP binding site.

This sequence belongs to the class-I aminoacyl-tRNA synthetase family.

The protein localises to the cytoplasm. The enzyme catalyses tRNA(Leu) + L-leucine + ATP = L-leucyl-tRNA(Leu) + AMP + diphosphate. In Chromohalobacter salexigens (strain ATCC BAA-138 / DSM 3043 / CIP 106854 / NCIMB 13768 / 1H11), this protein is Leucine--tRNA ligase.